We begin with the raw amino-acid sequence, 145 residues long: Large ribosomal subunit protein uL15 (145 aa).

The disordered stretch occupies residues Met1–Leu58. Positions Arg19–Gln33 are enriched in gly residues.

Belongs to the universal ribosomal protein uL15 family. As to quaternary structure, part of the 50S ribosomal subunit.

In terms of biological role, binds to the 23S rRNA. This Borrelia garinii subsp. bavariensis (strain ATCC BAA-2496 / DSM 23469 / PBi) (Borreliella bavariensis) protein is Large ribosomal subunit protein uL15.